A 130-amino-acid polypeptide reads, in one-letter code: Histone H2A (130 aa).

An N6-acetyllysine mark is found at Lys-4 and Lys-7. Gln-105 carries the N5-methylglutamine modification. Phosphoserine is present on Ser-127. The [ST]-Q motif signature appears at 127–128 (SQ).

The protein belongs to the histone H2A family. In terms of assembly, the nucleosome is a histone octamer containing two molecules each of H2A, H2B, H3 and H4 assembled in one H3-H4 heterotetramer and two H2A-H2B heterodimers. The octamer wraps approximately 147 bp of DNA. Post-translationally, phosphorylated to form H2AS128ph (gamma-H2A) in response to DNA double-strand breaks (DSBs) generated by exogenous genotoxic agents and by stalled replication forks. Phosphorylation is dependent on the DNA damage checkpoint kinases MEC1/ATR and TEL1/ATM, spreads on either side of a detected DSB site and may mark the surrounding chromatin for recruitment of proteins required for DNA damage signaling and repair. Gamma-H2A is removed from the DNA prior to the strand invasion-primer extension step of the repair process and subsequently dephosphorylated by PPH3, a component of the histone H2A phosphatase complex (HTP-C). Dephosphorylation is necessary for efficient recovery from the DNA damage checkpoint. In terms of processing, acetylated by ESA1 to form H2AK4ac and H2AK7ac.

The protein localises to the nucleus. It is found in the chromosome. Core component of nucleosome which plays a central role in DNA double strand break (DSB) repair. Nucleosomes wrap and compact DNA into chromatin, limiting DNA accessibility to the cellular machineries which require DNA as a template. Histones thereby play a central role in transcription regulation, DNA repair, DNA replication and chromosomal stability. DNA accessibility is regulated via a complex set of post-translational modifications of histones, also called histone code, and nucleosome remodeling. In Kluyveromyces lactis (strain ATCC 8585 / CBS 2359 / DSM 70799 / NBRC 1267 / NRRL Y-1140 / WM37) (Yeast), this protein is Histone H2A (HTA1).